The sequence spans 584 residues: Interferon regulatory factor 2-binding protein 1 (584 aa).

The segment at 60–127 (VLPEGRSPGP…SGRLPLPSPA (68 aa)) is disordered. A phosphoserine mark is found at serine 66 and serine 125. An Omega-N-methylarginine modification is found at arginine 177. Serine 186 is subject to Phosphoserine. Residues 197–217 (EKEKQQRNADCLAELNEAMRG) adopt a coiled-coil conformation. A Glycyl lysine isopeptide (Lys-Gly) (interchain with G-Cter in SUMO2) cross-link involves residue lysine 227. Residues 346-420 (PAEALPQQYP…PYSAETPGVP (75 aa)) are disordered. Pro residues predominate over residues 354–369 (YPEPAPAALCGPPPRA). Phosphoserine occurs at positions 371, 384, 421, and 436. The segment at 433–495 (LGHSPKDPGG…VSGGGSGTGA (63 aa)) is disordered. A Glycyl lysine isopeptide (Lys-Gly) (interchain with G-Cter in SUMO2) cross-link involves residue lysine 438. Positions 449–463 (AGGASPAASSTAQPP) are enriched in low complexity. A phosphoserine mark is found at serine 453 and serine 457. The segment at 503–550 (CTLCRERLEDTHFVQCPSVPGHKFCFPCSREFIKAQGPAGEVYCPSGD) adopts an RING-type; degenerate zinc-finger fold. The interval 503–550 (CTLCRERLEDTHFVQCPSVPGHKFCFPCSREFIKAQGPAGEVYCPSGD) is cys-rich.

It belongs to the IRF2BP family. Interacts with IRF2. Part of a corepressor complex containing IRF2 and IRF2BP2. Interacts with JDP2.

Its subcellular location is the nucleus. The enzyme catalyses S-ubiquitinyl-[E2 ubiquitin-conjugating enzyme]-L-cysteine + [acceptor protein]-L-lysine = [E2 ubiquitin-conjugating enzyme]-L-cysteine + N(6)-ubiquitinyl-[acceptor protein]-L-lysine.. In terms of biological role, acts as a transcriptional corepressor in a IRF2-dependent manner; this repression is not mediated by histone deacetylase activities. May act as an E3 ligase towards JDP2, enhancing its polyubiquitination. Represses ATF2-dependent transcriptional activation. The polypeptide is Interferon regulatory factor 2-binding protein 1 (IRF2BP1) (Homo sapiens (Human)).